Consider the following 152-residue polypeptide: B3 domain-containing protein At1g10455 (152 aa).

A DNA-binding region (TF-B3) is located at residues 24–131 (LKKKLSDSDL…EVKFKHFKSQ (108 aa)).

The protein resides in the nucleus. The sequence is that of B3 domain-containing protein At1g10455 from Arabidopsis thaliana (Mouse-ear cress).